The chain runs to 536 residues: Nuclear hormone receptor family member nhr-7 (536 aa).

Positions 6 to 82 (NRICAVCGDT…VGMNPDYVRP (77 aa)) form a DNA-binding region, nuclear receptor. 2 consecutive NR C4-type zinc fingers follow at residues 9–29 (CAVC…CFGC) and 46–70 (CRFE…FRKC). In terms of domain architecture, NR LBD spans 155–378 (ADRSLARKTG…PFHKILTDII (224 aa)). The segment at 427–465 (SPCQISAPPPPQQQYTDYSQMPSTSSYPANSSPFQSPYR) is disordered. A compositionally biased stretch (polar residues) spans 439 to 465 (QQYTDYSQMPSTSSYPANSSPFQSPYR).

It belongs to the nuclear hormone receptor family.

It localises to the nucleus. Functionally, orphan nuclear receptor. This chain is Nuclear hormone receptor family member nhr-7 (nhr-7), found in Caenorhabditis elegans.